A 354-amino-acid polypeptide reads, in one-letter code: Peptide chain release factor 1 (354 aa).

At Gln232 the chain carries N5-methylglutamine.

The protein belongs to the prokaryotic/mitochondrial release factor family. Methylated by PrmC. Methylation increases the termination efficiency of RF1.

Its subcellular location is the cytoplasm. In terms of biological role, peptide chain release factor 1 directs the termination of translation in response to the peptide chain termination codons UAG and UAA. The protein is Peptide chain release factor 1 of Phytoplasma australiense.